The primary structure comprises 710 residues: Polyribonucleotide nucleotidyltransferase (710 aa).

Positions 488 and 494 each coordinate Mg(2+). Residues 555 to 615 (PVIKVISIDP…EKVDAAIEQI (61 aa)) enclose the KH domain. Residues 625-688 (GDVFSGKVTR…NLGRLQLEEF (64 aa)) form the S1 motif domain. Residues 688-710 (FSDSPDHKHGEKRSFKRHRKNDN) form a disordered region. Residues 691 to 700 (SPDHKHGEKR) are compositionally biased toward basic and acidic residues. Over residues 701–710 (SFKRHRKNDN) the composition is skewed to basic residues.

The protein belongs to the polyribonucleotide nucleotidyltransferase family. Mg(2+) serves as cofactor.

The protein localises to the cytoplasm. It catalyses the reaction RNA(n+1) + phosphate = RNA(n) + a ribonucleoside 5'-diphosphate. In terms of biological role, involved in mRNA degradation. Catalyzes the phosphorolysis of single-stranded polyribonucleotides processively in the 3'- to 5'-direction. This Pseudothermotoga lettingae (strain ATCC BAA-301 / DSM 14385 / NBRC 107922 / TMO) (Thermotoga lettingae) protein is Polyribonucleotide nucleotidyltransferase.